Reading from the N-terminus, the 358-residue chain is G-protein coupled receptor 87 (358 aa).

The Extracellular portion of the chain corresponds to 1-47 (MGLNLTLTKLPGNELYSQASHTANSTSEGHGKNSTLHNKFDTIILPV). 3 N-linked (GlcNAc...) asparagine glycosylation sites follow: Asn-4, Asn-24, and Asn-33. The chain crosses the membrane as a helical span at residues 48–68 (LYLVIFVASILLNGLAVWIFF). Residues 69 to 75 (HIRNKTS) lie on the Cytoplasmic side of the membrane. Residues 76–96 (FIFYLKNIVVADLIMTLTFPF) form a helical membrane-spanning segment. Residues 97–116 (RIVRDAGFGPWYFEFILCRY) are Extracellular-facing. Cys-114 and Cys-192 are oxidised to a cystine. A helical membrane pass occupies residues 117-137 (TSVLFYANMYTSIVFLGLISV). The Cytoplasmic segment spans residues 138–159 (DRYLKVVKPFGDSRMYSITFTK). The chain crosses the membrane as a helical span at residues 160-180 (VLSVCVWVIMAILSLPNIILT). The Extracellular portion of the chain corresponds to 181 to 208 (NGQPTKENIHDCMKLKSPLGAKWHMAVT). Residues 209-229 (YVDSCLFVAVLVILIGCYIAI) form a helical membrane-spanning segment. Topologically, residues 230–256 (SRYIHKSSRQFISQSSRKRKHNQSIRV) are cytoplasmic. The helical transmembrane segment at 257-277 (VVAVFFTCFLPYHLCRIPFTF) threads the bilayer. The Extracellular segment spans residues 278–297 (SNLDRLLDESAHKILYYCKE). The chain crosses the membrane as a helical span at residues 298 to 318 (MTLFLSACNVCLDPIIYFFMC). Residues 319–358 (KSFSRRLFKKSNIRTRSESIRSLQSVRRSEVRIYYDYTDV) lie on the Cytoplasmic side of the membrane.

This sequence belongs to the G-protein coupled receptor 1 family. In terms of tissue distribution, expressed at high levels in testis and brain and to a lesser extent placenta, ovary, prostate, and skeletal muscle but not in heart, lung, kidney, liver or intestine.

It localises to the cell membrane. Functionally, receptor for lysophosphatidic acid (LPA). Necessary for p53/TP53-dependent survival in response to DNA damage. Promotes the Hippo-YAP signaling pathway and thereby modulates glycolysis and oxidative stress production by the regulation of hexokinase-2/HK2. The sequence is that of G-protein coupled receptor 87 (Gpr87) from Mus musculus (Mouse).